We begin with the raw amino-acid sequence, 143 residues long: Large ribosomal subunit protein uL15 (143 aa).

Residues M1 to Q54 are disordered. A compositionally biased stretch (gly residues) spans R21 to A31.

Belongs to the universal ribosomal protein uL15 family. In terms of assembly, part of the 50S ribosomal subunit.

Binds to the 23S rRNA. This Acidovorax ebreus (strain TPSY) (Diaphorobacter sp. (strain TPSY)) protein is Large ribosomal subunit protein uL15.